We begin with the raw amino-acid sequence, 219 residues long: Mediator of RNA polymerase II transcription subunit 20b (219 aa).

The protein belongs to the Mediator complex subunit 20 family. In terms of assembly, component of the Mediator complex.

It is found in the nucleus. Component of the Mediator complex, a coactivator involved in the regulated transcription of nearly all RNA polymerase II-dependent genes. Mediator functions as a bridge to convey information from gene-specific regulatory proteins to the basal RNA polymerase II transcription machinery. The Mediator complex, having a compact conformation in its free form, is recruited to promoters by direct interactions with regulatory proteins and serves for the assembly of a functional preinitiation complex with RNA polymerase II and the general transcription factors. This chain is Mediator of RNA polymerase II transcription subunit 20b (MED20B), found in Arabidopsis thaliana (Mouse-ear cress).